The sequence spans 331 residues: Protein-methionine-sulfoxide reductase catalytic subunit MsrP (331 aa).

Residues 1 to 54 (MLIKTDRWLRGDDIPASEITPQHLFDQRRRLLAAAALGAAGAALSPWAARRAFA) constitute a signal peptide (tat-type signal). Mo-molybdopterin is bound by residues asparagine 86, 89 to 90 (YE), cysteine 144, serine 179, asparagine 227, arginine 232, and 243 to 245 (SAK).

This sequence belongs to the MsrP family. In terms of assembly, heterodimer of a catalytic subunit (MsrP) and a heme-binding subunit (MsrQ). The cofactor is Mo-molybdopterin. In terms of processing, predicted to be exported by the Tat system. The position of the signal peptide cleavage has not been experimentally proven.

The protein localises to the periplasm. It catalyses the reaction L-methionyl-[protein] + a quinone + H2O = L-methionyl-(S)-S-oxide-[protein] + a quinol. The enzyme catalyses L-methionyl-[protein] + a quinone + H2O = L-methionyl-(R)-S-oxide-[protein] + a quinol. Part of the MsrPQ system that repairs oxidized periplasmic proteins containing methionine sulfoxide residues (Met-O), using respiratory chain electrons. Thus protects these proteins from oxidative-stress damage caused by reactive species of oxygen and chlorine generated by the host defense mechanisms. MsrPQ is essential for the maintenance of envelope integrity under bleach stress, rescuing a wide series of structurally unrelated periplasmic proteins from methionine oxidation. The catalytic subunit MsrP is non-stereospecific, being able to reduce both (R-) and (S-) diastereoisomers of methionine sulfoxide. The protein is Protein-methionine-sulfoxide reductase catalytic subunit MsrP of Ralstonia nicotianae (strain ATCC BAA-1114 / GMI1000) (Ralstonia solanacearum).